A 484-amino-acid chain; its full sequence is Pyruvate kinase (484 aa).

Arg-33 lines the substrate pocket. K(+)-binding residues include Asn-35, Ser-37, Asp-67, and Thr-68. 35-38 provides a ligand contact to ATP; the sequence is NFSH. Arg-74 and Lys-155 together coordinate ATP. Glu-221 contributes to the Mg(2+) binding site. The substrate site is built by Gly-244, Asp-245, and Thr-277. Asp-245 is a binding site for Mg(2+).

The protein belongs to the pyruvate kinase family. As to quaternary structure, homotetramer. Mg(2+) is required as a cofactor. It depends on K(+) as a cofactor.

The enzyme catalyses pyruvate + ATP = phosphoenolpyruvate + ADP + H(+). It functions in the pathway carbohydrate degradation; glycolysis; pyruvate from D-glyceraldehyde 3-phosphate: step 5/5. The chain is Pyruvate kinase (pyk) from Chlamydia pneumoniae (Chlamydophila pneumoniae).